The chain runs to 356 residues: Cytochrome c oxidase subunit 2 (356 aa).

Residues 1–20 (MVKHWRLILLLALVPLLLSG) form the signal peptide. Cysteine 21 carries the N-palmitoyl cysteine lipid modification. Cysteine 21 carries the S-diacylglycerol cysteine lipid modification. At 21-47 (CGKPFLSTLKPAGEVADKQYDLTVLST) the chain is on the extracellular side. The segment at 21–257 (CGKPFLSTLK…KNYKSTAESD (237 aa)) is cytochrome c oxidase subunit II. Residues 48 to 66 (LIMVVVVAVVSVIFFYVIV) traverse the membrane as a helical segment. Residues 67-87 (RFRRSRVGENTIPKQVEGNKF) are Cytoplasmic-facing. A helical membrane pass occupies residues 88–106 (LEITWTVIPILLLIILVIP). The Extracellular portion of the chain corresponds to 107–356 (VVLYTLELAD…YLKGLKAESK (250 aa)). 4 residues coordinate Cu cation: histidine 176, cysteine 217, cysteine 221, and histidine 225. The Cytochrome c domain occupies 258–356 (LAKQGEELFK…YLKGLKAESK (99 aa)). Cysteine 271, cysteine 274, histidine 275, and methionine 329 together coordinate heme c.

Belongs to the cytochrome c oxidase subunit 2 family. Requires Cu cation as cofactor. It depends on heme c as a cofactor.

The protein resides in the cell membrane. The catalysed reaction is 4 Fe(II)-[cytochrome c] + O2 + 8 H(+)(in) = 4 Fe(III)-[cytochrome c] + 2 H2O + 4 H(+)(out). In terms of biological role, subunits I and II form the functional core of the enzyme complex. Electrons originating in cytochrome c are transferred via heme a and Cu(A) to the binuclear center formed by heme a3 and Cu(B). The chain is Cytochrome c oxidase subunit 2 (ctaC) from Bacillus subtilis (strain 168).